The primary structure comprises 374 residues: Tomoregulin-2 (374 aa).

Residues 1–40 (MVLWESPRQCSSWTLCEGFCWLLLLPVTLLIIARPVKLAA) form the signal peptide. At 41–320 (FPTSLSDCQT…VPGPVRFQYV (280 aa)) the chain is on the extracellular side. The N-linked (GlcNAc...) asparagine glycan is linked to Asn-55. Kazal-like domains are found at residues 90–137 (VCQF…SCAT) and 181–229 (VCNI…RCQD). 6 disulfides stabilise this stretch: Cys-91/Cys-121, Cys-95/Cys-114, Cys-103/Cys-135, Cys-182/Cys-213, Cys-186/Cys-206, and Cys-195/Cys-227. Residue Asn-230 is glycosylated (N-linked (GlcNAc...) asparagine). The EGF-like domain maps to 261-301 (HHIPCPEHYNGFCMHGKCEHSINMQEPSCRCDAGYTGQHCE). 3 cysteine pairs are disulfide-bonded: Cys-265–Cys-278, Cys-273–Cys-289, and Cys-291–Cys-300. Positions 303 to 320 (KDYSVLYVVPGPVRFQYV) are required for shedding. The helical transmembrane segment at 321-341 (LIAAVIGTIQIAVICVVVLCI) threads the bilayer. Topologically, residues 342–374 (TRKCPRSNRIHRQKQNTGHYSSDNTTRASTRLI) are cytoplasmic. The tract at residues 353-374 (RQKQNTGHYSSDNTTRASTRLI) is disordered. Polar residues predominate over residues 356 to 374 (QNTGHYSSDNTTRASTRLI).

Belongs to the tomoregulin family. Post-translationally, O-glycosylated; contains chondroitin sulfate glycosaminoglycans. A soluble form (TMEFF2-ECD) is produced by proteolytic shedding. This shedding can be induced by phorbol ester or pro-inflammatory cytokines such as TNFalpha, and is mediated by a metalloproteinase ADAM. Widely expressed in the brain. In the olfactory bulb expressed in mitral cell, granule, and glomerular layers. In the hippocampus expressed in hippocampal cornu ammonis, pyramidal layer, dentate gyrus, and substantia nigra pars compacta.

It localises to the membrane. In terms of biological role, may be a survival factor for hippocampal and mesencephalic neurons. The shedded form may up-regulate cell proliferation. This is Tomoregulin-2 (Tmeff2) from Mus musculus (Mouse).